Consider the following 396-residue polypeptide: NADH-quinone oxidoreductase subunit D 2 (396 aa).

This sequence belongs to the complex I 49 kDa subunit family. In terms of assembly, NDH-1 is composed of 14 different subunits. Subunits NuoB, C, D, E, F, and G constitute the peripheral sector of the complex.

It is found in the cell inner membrane. It catalyses the reaction a quinone + NADH + 5 H(+)(in) = a quinol + NAD(+) + 4 H(+)(out). Its function is as follows. NDH-1 shuttles electrons from NADH, via FMN and iron-sulfur (Fe-S) centers, to quinones in the respiratory chain. The immediate electron acceptor for the enzyme in this species is believed to be ubiquinone. Couples the redox reaction to proton translocation (for every two electrons transferred, four hydrogen ions are translocated across the cytoplasmic membrane), and thus conserves the redox energy in a proton gradient. The protein is NADH-quinone oxidoreductase subunit D 2 of Beijerinckia indica subsp. indica (strain ATCC 9039 / DSM 1715 / NCIMB 8712).